Here is a 291-residue protein sequence, read N- to C-terminus: DegV domain-containing protein CPE0026 (291 aa).

A DegV domain is found at 4–286 (FVIFTDSAAD…IGTLAVFFLG (283 aa)). Positions 63 and 95 each coordinate hexadecanoate.

Its function is as follows. May bind long-chain fatty acids, such as palmitate, and may play a role in lipid transport or fatty acid metabolism. This Clostridium perfringens (strain 13 / Type A) protein is DegV domain-containing protein CPE0026.